A 216-amino-acid chain; its full sequence is Probable nicotinate-nucleotide adenylyltransferase (216 aa).

It belongs to the NadD family.

It catalyses the reaction nicotinate beta-D-ribonucleotide + ATP + H(+) = deamido-NAD(+) + diphosphate. The protein operates within cofactor biosynthesis; NAD(+) biosynthesis; deamido-NAD(+) from nicotinate D-ribonucleotide: step 1/1. Its function is as follows. Catalyzes the reversible adenylation of nicotinate mononucleotide (NaMN) to nicotinic acid adenine dinucleotide (NaAD). The sequence is that of Probable nicotinate-nucleotide adenylyltransferase from Shewanella baltica (strain OS195).